We begin with the raw amino-acid sequence, 587 residues long: Pyruvate decarboxylase 3 (587 aa).

The substrate site is built by D48 and H135. Positions 415-496 are thiamine pyrophosphate binding; the sequence is DSWFNCQKLR…FLINNGGYTI (82 aa). The Mg(2+) site is built by D464, N491, and G493. E497 provides a ligand contact to substrate.

It belongs to the TPP enzyme family. As to quaternary structure, homotetramer. Requires a metal cation as cofactor. It depends on thiamine diphosphate as a cofactor.

It catalyses the reaction a 2-oxocarboxylate + H(+) = an aldehyde + CO2. In Oryza sativa subsp. japonica (Rice), this protein is Pyruvate decarboxylase 3 (PDC3).